The primary structure comprises 353 residues: Serine proteinase inhibitor 1 (353 aa).

The protein belongs to the serpin family. Poxviruses subfamily.

The protein localises to the host cytoplasm. Its function is as follows. Plays a role in mediating viral host range. May act to inhibit a caspase independent form of apoptosis to allow efficient virus replication in infected cells. This Vaccinia virus (strain Copenhagen) (VACV) protein is Serine proteinase inhibitor 1 (OPG208).